The sequence spans 419 residues: Tryptophan synthase beta chain (419 aa).

Lys113 is subject to N6-(pyridoxal phosphate)lysine.

Belongs to the TrpB family. Tetramer of two alpha and two beta chains. Requires pyridoxal 5'-phosphate as cofactor.

It catalyses the reaction (1S,2R)-1-C-(indol-3-yl)glycerol 3-phosphate + L-serine = D-glyceraldehyde 3-phosphate + L-tryptophan + H2O. It participates in amino-acid biosynthesis; L-tryptophan biosynthesis; L-tryptophan from chorismate: step 5/5. Functionally, the beta subunit is responsible for the synthesis of L-tryptophan from indole and L-serine. This Picrophilus torridus (strain ATCC 700027 / DSM 9790 / JCM 10055 / NBRC 100828 / KAW 2/3) protein is Tryptophan synthase beta chain.